The following is a 704-amino-acid chain: Elongation factor G (704 aa).

The tr-type G domain maps to 8 to 291; that stretch reads DKVRNIGIMA…AVVEYLASPV (284 aa). Residues 17 to 24, 90 to 94, and 144 to 147 each bind GTP; these read AHIDAGKT, DTPGH, and NKMD.

It belongs to the TRAFAC class translation factor GTPase superfamily. Classic translation factor GTPase family. EF-G/EF-2 subfamily.

It is found in the cytoplasm. Its function is as follows. Catalyzes the GTP-dependent ribosomal translocation step during translation elongation. During this step, the ribosome changes from the pre-translocational (PRE) to the post-translocational (POST) state as the newly formed A-site-bound peptidyl-tRNA and P-site-bound deacylated tRNA move to the P and E sites, respectively. Catalyzes the coordinated movement of the two tRNA molecules, the mRNA and conformational changes in the ribosome. In Pelodictyon phaeoclathratiforme (strain DSM 5477 / BU-1), this protein is Elongation factor G.